A 239-amino-acid polypeptide reads, in one-letter code: Myogenic factor 6 (239 aa).

The disordered stretch occupies residues 27 to 64 (QHLDMPGVSPLYDGNHSPLSPGPDNVPSETGGESSGDE). Residues 96 to 147 (DRRKAATLRERRRLKKINEAFDALKRKSVANPNQRLPKVEILRSAISYIERL) form the bHLH domain. The segment at 155-184 (DEQERGQSGASDTRNDKEQNRPSGGDYCWK) is disordered.

Efficient DNA binding requires dimerization with another bHLH protein.

It localises to the nucleus. Functionally, involved in muscle differentiation (myogenic factor). Induces fibroblasts to differentiate into myoblasts. Probable sequence specific DNA-binding protein. In Tetraodon nigroviridis (Spotted green pufferfish), this protein is Myogenic factor 6 (myf6).